The sequence spans 358 residues: UDP-N-acetylglucosamine--N-acetylmuramyl-(pentapeptide) pyrophosphoryl-undecaprenol N-acetylglucosamine transferase (358 aa).

Residues serine 196 and glutamine 287 each coordinate UDP-N-acetyl-alpha-D-glucosamine.

This sequence belongs to the glycosyltransferase 28 family. MurG subfamily.

Its subcellular location is the cell membrane. The catalysed reaction is Mur2Ac(oyl-L-Ala-gamma-D-Glu-L-Lys-D-Ala-D-Ala)-di-trans,octa-cis-undecaprenyl diphosphate + UDP-N-acetyl-alpha-D-glucosamine = beta-D-GlcNAc-(1-&gt;4)-Mur2Ac(oyl-L-Ala-gamma-D-Glu-L-Lys-D-Ala-D-Ala)-di-trans,octa-cis-undecaprenyl diphosphate + UDP + H(+). It functions in the pathway cell wall biogenesis; peptidoglycan biosynthesis. Cell wall formation. Catalyzes the transfer of a GlcNAc subunit on undecaprenyl-pyrophosphoryl-MurNAc-pentapeptide (lipid intermediate I) to form undecaprenyl-pyrophosphoryl-MurNAc-(pentapeptide)GlcNAc (lipid intermediate II). In Streptococcus uberis (strain ATCC BAA-854 / 0140J), this protein is UDP-N-acetylglucosamine--N-acetylmuramyl-(pentapeptide) pyrophosphoryl-undecaprenol N-acetylglucosamine transferase.